Reading from the N-terminus, the 180-residue chain is Methionine-R-sulfoxide reductase B2, mitochondrial (180 aa).

A mitochondrion-targeting transit peptide spans 1 to 41 (MSRFLVRLSTVVSKGATGKSVLPQKRIFAGIRLISSSTGLQ). Positions 49-178 (STDWQRKLSP…NSVALNFKPR (130 aa)) constitute a MsrB domain. Residues cysteine 88, cysteine 91, cysteine 144, and cysteine 147 each coordinate Zn(2+). Cysteine 167 (nucleophile) is an active-site residue.

Belongs to the MsrB Met sulfoxide reductase family. Requires Zn(2+) as cofactor.

It localises to the mitochondrion. It catalyses the reaction L-methionyl-[protein] + [thioredoxin]-disulfide + H2O = L-methionyl-(R)-S-oxide-[protein] + [thioredoxin]-dithiol. It carries out the reaction [thioredoxin]-disulfide + L-methionine + H2O = L-methionine (R)-S-oxide + [thioredoxin]-dithiol. Its function is as follows. Methionine-sulfoxide reductase that specifically reduces methionine (R)-sulfoxide back to methionine. While in many cases, methionine oxidation is the result of random oxidation following oxidative stress, methionine oxidation is also a post-translational modification that takes place on specific residue. Upon oxidative stress, may play a role in the preservation of mitochondrial integrity by decreasing the intracellular reactive oxygen species build-up through its scavenging role, hence contributing to cell survival and protein maintenance. The polypeptide is Methionine-R-sulfoxide reductase B2, mitochondrial (msrb2) (Danio rerio (Zebrafish)).